Reading from the N-terminus, the 88-residue chain is Large ribosomal subunit protein eL37A (88 aa).

Zn(2+) contacts are provided by Cys19, Cys22, Cys34, and Cys37. The C4-type zinc finger occupies 19-37 (CNRCGRRSFHVQKKTCSSC).

It belongs to the eukaryotic ribosomal protein eL37 family. Component of the large ribosomal subunit (LSU). Mature yeast ribosomes consist of a small (40S) and a large (60S) subunit. The 40S small subunit contains 1 molecule of ribosomal RNA (18S rRNA) and 33 different proteins (encoded by 57 genes). The large 60S subunit contains 3 rRNA molecules (25S, 5.8S and 5S rRNA) and 46 different proteins (encoded by 81 genes). Zn(2+) is required as a cofactor.

The protein resides in the cytoplasm. Its function is as follows. Component of the ribosome, a large ribonucleoprotein complex responsible for the synthesis of proteins in the cell. The small ribosomal subunit (SSU) binds messenger RNAs (mRNAs) and translates the encoded message by selecting cognate aminoacyl-transfer RNA (tRNA) molecules. The large subunit (LSU) contains the ribosomal catalytic site termed the peptidyl transferase center (PTC), which catalyzes the formation of peptide bonds, thereby polymerizing the amino acids delivered by tRNAs into a polypeptide chain. The nascent polypeptides leave the ribosome through a tunnel in the LSU and interact with protein factors that function in enzymatic processing, targeting, and the membrane insertion of nascent chains at the exit of the ribosomal tunnel. The chain is Large ribosomal subunit protein eL37A from Saccharomyces cerevisiae (strain ATCC 204508 / S288c) (Baker's yeast).